Reading from the N-terminus, the 293-residue chain is Bifunctional protein FolD (293 aa).

NADP(+)-binding positions include 164–166 (GRS), Ser193, and Thr234.

It belongs to the tetrahydrofolate dehydrogenase/cyclohydrolase family. In terms of assembly, homodimer.

It catalyses the reaction (6R)-5,10-methylene-5,6,7,8-tetrahydrofolate + NADP(+) = (6R)-5,10-methenyltetrahydrofolate + NADPH. The enzyme catalyses (6R)-5,10-methenyltetrahydrofolate + H2O = (6R)-10-formyltetrahydrofolate + H(+). Its pathway is one-carbon metabolism; tetrahydrofolate interconversion. Catalyzes the oxidation of 5,10-methylenetetrahydrofolate to 5,10-methenyltetrahydrofolate and then the hydrolysis of 5,10-methenyltetrahydrofolate to 10-formyltetrahydrofolate. This Bacteroides fragilis (strain ATCC 25285 / DSM 2151 / CCUG 4856 / JCM 11019 / LMG 10263 / NCTC 9343 / Onslow / VPI 2553 / EN-2) protein is Bifunctional protein FolD.